A 313-amino-acid polypeptide reads, in one-letter code: tRNA dimethylallyltransferase (313 aa).

Residue glycine 17–threonine 24 participates in ATP binding. Threonine 19–threonine 24 is a substrate binding site. Interaction with substrate tRNA regions lie at residues aspartate 42–leucine 45, glutamine 166–arginine 170, and arginine 247–arginine 252.

Belongs to the IPP transferase family. As to quaternary structure, monomer. Mg(2+) is required as a cofactor.

The catalysed reaction is adenosine(37) in tRNA + dimethylallyl diphosphate = N(6)-dimethylallyladenosine(37) in tRNA + diphosphate. Functionally, catalyzes the transfer of a dimethylallyl group onto the adenine at position 37 in tRNAs that read codons beginning with uridine, leading to the formation of N6-(dimethylallyl)adenosine (i(6)A). This Pectobacterium atrosepticum (strain SCRI 1043 / ATCC BAA-672) (Erwinia carotovora subsp. atroseptica) protein is tRNA dimethylallyltransferase.